The primary structure comprises 240 residues: 1-(5-phosphoribosyl)-5-[(5-phosphoribosylamino)methylideneamino] imidazole-4-carboxamide isomerase (240 aa).

D8 serves as the catalytic Proton acceptor. D129 functions as the Proton donor in the catalytic mechanism.

Belongs to the HisA/HisF family.

It localises to the cytoplasm. It catalyses the reaction 1-(5-phospho-beta-D-ribosyl)-5-[(5-phospho-beta-D-ribosylamino)methylideneamino]imidazole-4-carboxamide = 5-[(5-phospho-1-deoxy-D-ribulos-1-ylimino)methylamino]-1-(5-phospho-beta-D-ribosyl)imidazole-4-carboxamide. The protein operates within amino-acid biosynthesis; L-histidine biosynthesis; L-histidine from 5-phospho-alpha-D-ribose 1-diphosphate: step 4/9. The polypeptide is 1-(5-phosphoribosyl)-5-[(5-phosphoribosylamino)methylideneamino] imidazole-4-carboxamide isomerase (Clostridium beijerinckii (strain ATCC 51743 / NCIMB 8052) (Clostridium acetobutylicum)).